A 187-amino-acid chain; its full sequence is MRLVLLGPPGSGKGTQATRLKDTFDIPHISTGDLLRAEVAAGSPLGLKAKEVMARGDLVSDDILLGMLEARLGQADVAKGFILDGYPRNVAQANALDELLGKIGQPLDAVVQLDVASELLVERIAGRAKAEGREDDNPESVRKRLQVYTDSTAPVIGFYEQRGKLARVDGVGSLDEVLERISKALGR.

Residue 10 to 15 (GSGKGT) participates in ATP binding. The segment at 30 to 59 (STGDLLRAEVAAGSPLGLKAKEVMARGDLV) is NMP. Residues Thr31, Arg36, 57 to 59 (DLV), 85 to 88 (GYPR), and Gln92 each bind AMP. Residues 126–136 (GRAKAEGREDD) are LID. Arg127 lines the ATP pocket. 2 residues coordinate AMP: Arg133 and Arg144. An ATP-binding site is contributed by Gly172.

This sequence belongs to the adenylate kinase family. As to quaternary structure, monomer.

The protein localises to the cytoplasm. The enzyme catalyses AMP + ATP = 2 ADP. It participates in purine metabolism; AMP biosynthesis via salvage pathway; AMP from ADP: step 1/1. Functionally, catalyzes the reversible transfer of the terminal phosphate group between ATP and AMP. Plays an important role in cellular energy homeostasis and in adenine nucleotide metabolism. This chain is Adenylate kinase, found in Xanthomonas axonopodis pv. citri (strain 306).